Consider the following 63-residue polypeptide: Large ribosomal subunit protein uL29 (63 aa).

Belongs to the universal ribosomal protein uL29 family.

The protein is Large ribosomal subunit protein uL29 of Colwellia psychrerythraea (strain 34H / ATCC BAA-681) (Vibrio psychroerythus).